We begin with the raw amino-acid sequence, 97 residues long: Aspartyl/glutamyl-tRNA(Asn/Gln) amidotransferase subunit C (97 aa).

Belongs to the GatC family. As to quaternary structure, heterotrimer of A, B and C subunits.

It catalyses the reaction L-glutamyl-tRNA(Gln) + L-glutamine + ATP + H2O = L-glutaminyl-tRNA(Gln) + L-glutamate + ADP + phosphate + H(+). The catalysed reaction is L-aspartyl-tRNA(Asn) + L-glutamine + ATP + H2O = L-asparaginyl-tRNA(Asn) + L-glutamate + ADP + phosphate + 2 H(+). Functionally, allows the formation of correctly charged Asn-tRNA(Asn) or Gln-tRNA(Gln) through the transamidation of misacylated Asp-tRNA(Asn) or Glu-tRNA(Gln) in organisms which lack either or both of asparaginyl-tRNA or glutaminyl-tRNA synthetases. The reaction takes place in the presence of glutamine and ATP through an activated phospho-Asp-tRNA(Asn) or phospho-Glu-tRNA(Gln). The protein is Aspartyl/glutamyl-tRNA(Asn/Gln) amidotransferase subunit C of Synechococcus sp. (strain JA-2-3B'a(2-13)) (Cyanobacteria bacterium Yellowstone B-Prime).